Consider the following 245-residue polypeptide: tRNA (guanine-N(1)-)-methyltransferase (245 aa).

Residues G111 and 131-136 (IGDYVL) contribute to the S-adenosyl-L-methionine site.

Belongs to the RNA methyltransferase TrmD family. Homodimer.

It is found in the cytoplasm. The enzyme catalyses guanosine(37) in tRNA + S-adenosyl-L-methionine = N(1)-methylguanosine(37) in tRNA + S-adenosyl-L-homocysteine + H(+). Specifically methylates guanosine-37 in various tRNAs. This Staphylococcus carnosus (strain TM300) protein is tRNA (guanine-N(1)-)-methyltransferase.